A 1151-amino-acid polypeptide reads, in one-letter code: SCF E3 ubiquitin ligase complex F-box protein GRR1 (1151 aa).

Residues Met-1–Asp-18 show a composition bias toward basic and acidic residues. Residues Met-1–Val-72 are disordered. The span at Asn-38–Asn-49 shows a compositional bias: low complexity. Residues Arg-58–Val-72 show a composition bias toward basic and acidic residues. Residues Ser-199 and Ser-300 each carry the phosphoserine modification. The F-box domain maps to Val-314–His-361. LRR repeat units follow at residues Gly-399–Phe-423, Cys-424–Gly-449, Ile-450–Gln-475, Ala-476–Ala-501, Asn-502–Leu-527, Ser-528–His-553, Asn-554–Gly-582, Cys-583–Lys-608, Cys-609–His-634, Cys-635–Cys-660, Cys-661–Lys-685, Cys-686–Tyr-714, and Cys-715–Ala-740. Residues Ala-1066–Asn-1080 are compositionally biased toward low complexity. Disordered stretches follow at residues Ala-1066–Phe-1090 and Val-1118–Leu-1151.

Interacts with SKP1. Component of the probable SCF(GRR1) complex containing CDC53, SKP1, RBX1 and GRR1.

It localises to the membrane. The protein operates within protein modification; protein ubiquitination. Its function is as follows. Substrate recognition component of a SCF (SKP1-CUL1-F-box protein) E3 ubiquitin-protein ligase complex which mediates the ubiquitination and subsequent proteasomal degradation of target proteins. Recognizes and directs ubiquitination of phosphorylated CLN1, CLN2 and GIC2. Probably constitutes the primary response element required for the generation or interpretation of the signal that induces glucose repression. The sequence is that of SCF E3 ubiquitin ligase complex F-box protein GRR1 (GRR1) from Saccharomyces cerevisiae (strain ATCC 204508 / S288c) (Baker's yeast).